Consider the following 468-residue polypeptide: MALGRCIAEGWTLERVAVKQVSWFLIYSWVCSGVCRGVSVPEQGGGGQKAGAFTCLSNSIYRIDCHWSAPELGQESRAWLLFTSNQVTEIKHKCTFWDSMCTLVLPKEEVFLPFDNFTITLHRCIMGQEQVSLVDSQYLPRRHIKLDPPSDLQSNVSSGRCVLTWGINLALEPLITSLSYELAFKRQEEAWEARHKDRIVGVTWLILEAVELNPGSIYEARLRVQMTLESYEDKTEGEYYKSHWSEWSQPVSFPSPQRRQGLLVPRWQWSASILVVVPIFLLLTGFVHLLFKLSPRLKRIFYQNIPSPEAFFHPLYSVYHGDFQSWTGARRAGPQARQNGVSTSSAGSESSIWEAVATLTYSPACPVQFACLKWEATAPGFPGLPGSEHVLPAGCLELEGQPSAYLPQEDWAPLGSARPPPPDSDSGSSDYCMLDCCEECHLSAFPGHTESPELTLAQPVALPVSSRA.

The first 37 residues, 1 to 37 (MALGRCIAEGWTLERVAVKQVSWFLIYSWVCSGVCRG), serve as a signal peptide directing secretion. The Extracellular portion of the chain corresponds to 38–270 (VSVPEQGGGG…GLLVPRWQWS (233 aa)). N116 and N155 each carry an N-linked (GlcNAc...) asparagine glycan. In terms of domain architecture, Fibronectin type-III spans 148–256 (PPSDLQSNVS…WSQPVSFPSP (109 aa)). A WSXWS motif motif is present at residues 244-248 (WSEWS). Residues 271-291 (ASILVVVPIFLLLTGFVHLLF) form a helical membrane-spanning segment. The Cytoplasmic portion of the chain corresponds to 292–468 (KLSPRLKRIF…PVALPVSSRA (177 aa)). The short motif at 301 to 309 (FYQNIPSPE) is the Box 1 motif element. The interval 407 to 426 (PQEDWAPLGSARPPPPDSDS) is disordered.

It belongs to the type I cytokine receptor family. Type 4 subfamily. In terms of assembly, interacts with IL9.

It is found in the cell membrane. The protein localises to the secreted. Its function is as follows. Plays an important role in the immune response against parasites by acting as a receptor of IL9. The protein is Interleukin-9 receptor (Il9r) of Mus musculus (Mouse).